We begin with the raw amino-acid sequence, 305 residues long: Tyrosine recombinase XerC (305 aa).

In terms of domain architecture, Core-binding (CB) spans Thr-4–Glu-95. The Tyr recombinase domain maps to Leu-116–Thr-298. Active-site residues include Arg-159, Lys-182, His-250, Arg-253, and His-276. Tyr-285 (O-(3'-phospho-DNA)-tyrosine intermediate) is an active-site residue.

This sequence belongs to the 'phage' integrase family. XerC subfamily. In terms of assembly, forms a cyclic heterotetrameric complex composed of two molecules of XerC and two molecules of XerD.

It localises to the cytoplasm. In terms of biological role, site-specific tyrosine recombinase, which acts by catalyzing the cutting and rejoining of the recombining DNA molecules. The XerC-XerD complex is essential to convert dimers of the bacterial chromosome into monomers to permit their segregation at cell division. It also contributes to the segregational stability of plasmids. The chain is Tyrosine recombinase XerC from Rickettsia massiliae (strain Mtu5).